The following is a 360-amino-acid chain: Putative F-box protein At1g65770 (360 aa).

Residues 2-50 (ADWSTLPVDLLNMIAGRLFSNIELKRFRSICRSWRSSVPGAGKKNPFRT) form the F-box domain.

The sequence is that of Putative F-box protein At1g65770 from Arabidopsis thaliana (Mouse-ear cress).